Reading from the N-terminus, the 298-residue chain is 4-hydroxy-3-methylbut-2-enyl diphosphate reductase (298 aa).

[4Fe-4S] cluster is bound at residue cysteine 12. (2E)-4-hydroxy-3-methylbut-2-enyl diphosphate is bound by residues histidine 40 and histidine 78. Residues histidine 40 and histidine 78 each contribute to the dimethylallyl diphosphate site. Isopentenyl diphosphate contacts are provided by histidine 40 and histidine 78. Position 100 (cysteine 100) interacts with [4Fe-4S] cluster. Histidine 128 provides a ligand contact to (2E)-4-hydroxy-3-methylbut-2-enyl diphosphate. Residue histidine 128 participates in dimethylallyl diphosphate binding. Residue histidine 128 coordinates isopentenyl diphosphate. Glutamate 130 functions as the Proton donor in the catalytic mechanism. Threonine 171 lines the (2E)-4-hydroxy-3-methylbut-2-enyl diphosphate pocket. Cysteine 200 contacts [4Fe-4S] cluster. (2E)-4-hydroxy-3-methylbut-2-enyl diphosphate is bound by residues serine 228, serine 229, asparagine 230, and serine 270. The dimethylallyl diphosphate site is built by serine 228, serine 229, asparagine 230, and serine 270. Residues serine 228, serine 229, asparagine 230, and serine 270 each coordinate isopentenyl diphosphate.

The protein belongs to the IspH family. It depends on [4Fe-4S] cluster as a cofactor.

The enzyme catalyses isopentenyl diphosphate + 2 oxidized [2Fe-2S]-[ferredoxin] + H2O = (2E)-4-hydroxy-3-methylbut-2-enyl diphosphate + 2 reduced [2Fe-2S]-[ferredoxin] + 2 H(+). It carries out the reaction dimethylallyl diphosphate + 2 oxidized [2Fe-2S]-[ferredoxin] + H2O = (2E)-4-hydroxy-3-methylbut-2-enyl diphosphate + 2 reduced [2Fe-2S]-[ferredoxin] + 2 H(+). It functions in the pathway isoprenoid biosynthesis; dimethylallyl diphosphate biosynthesis; dimethylallyl diphosphate from (2E)-4-hydroxy-3-methylbutenyl diphosphate: step 1/1. The protein operates within isoprenoid biosynthesis; isopentenyl diphosphate biosynthesis via DXP pathway; isopentenyl diphosphate from 1-deoxy-D-xylulose 5-phosphate: step 6/6. Catalyzes the conversion of 1-hydroxy-2-methyl-2-(E)-butenyl 4-diphosphate (HMBPP) into a mixture of isopentenyl diphosphate (IPP) and dimethylallyl diphosphate (DMAPP). Acts in the terminal step of the DOXP/MEP pathway for isoprenoid precursor biosynthesis. The sequence is that of 4-hydroxy-3-methylbut-2-enyl diphosphate reductase from Kosmotoga olearia (strain ATCC BAA-1733 / DSM 21960 / TBF 19.5.1).